A 374-amino-acid polypeptide reads, in one-letter code: MSTIEPPMGLLAELTHRCPLQCPYCSNPLELERAGIELKTEEWLRIMDEAAELGVLQMHFSGGEPMVRKDLPELIARAVERQMYTNIITSGVLLDEAMMERLMKAGIDHIQLSFQDVDVENAERIGGLAGAQSKKLKAARLIKEAGLPLTLNYVIHRQNMENLPRMLEAAQAMGATRTEIANVQYYGWGLVNRDALLPSREQLEIATATVEEARERLKGVMVIDYVTPDYYAKRPKACMGGWARRFINISPSGKALPCHAAETLTGLEFPSVREWSLADIWSGAPAFQKYRGTDWMPEPCRSCDRREIDWGGCRCQAFALTGDMDITDPACALSPAHHVMEEAVSARGDVAPDYVYRRIGNAPVPNEVLSPVAE.

Positions 4-224 constitute a Radical SAM core domain; sequence IEPPMGLLAE…ERLKGVMVID (221 aa). [4Fe-4S] cluster is bound by residues Cys18, Cys22, and Cys25.

Belongs to the radical SAM superfamily. PqqE family. In terms of assembly, interacts with PqqD. The interaction is necessary for activity of PqqE. The cofactor is [4Fe-4S] cluster.

It catalyses the reaction [PQQ precursor protein] + S-adenosyl-L-methionine = E-Y cross-linked-[PQQ precursor protein] + 5'-deoxyadenosine + L-methionine + H(+). It participates in cofactor biosynthesis; pyrroloquinoline quinone biosynthesis. Catalyzes the cross-linking of a glutamate residue and a tyrosine residue in the PqqA protein as part of the biosynthesis of pyrroloquinoline quinone (PQQ). In Granulibacter bethesdensis (strain ATCC BAA-1260 / CGDNIH1), this protein is PqqA peptide cyclase.